The following is a 183-amino-acid chain: Abscisic acid receptor PYL10 (183 aa).

The tract at residues 20-172 (HELVESQCSS…NLNSLADVTE (153 aa)) is START-like. An intrachain disulfide couples C27 to C153. Residues K56, 85–90 (ATKSTE), 112–118 (RLKNYSS), and E137 each bind abscisate. The Gate loop motif lies at 81-85 (SGLPA). A Latch loop motif is present at residues 111–113 (HRL).

The protein belongs to the PYR/PYL/RCAR abscisic acid intracellular receptor family. As to quaternary structure, monomer. Forms heterodimer with PYL13, thus antagonizing PP2Cs-binding and ABA-independent inhibition of PP2Cs. Homodimer. Binds ABA on one subunit only. Binds to CARs protein in an ABA-independent manner, both at the plasma membrane and in the nucleus. Interacts with ABI1 and HAB1, and possibly with other PP2Cs, in an ABA-independent manner.

It is found in the cytoplasm. The protein localises to the nucleus. It localises to the cell membrane. Receptor for abscisic acid (ABA) required for ABA-mediated responses such as stomatal closure and germination inhibition. Inhibits the activity of group-A protein phosphatases type 2C (PP2Cs) in an ABA-independent manner but more efficiently when activated by ABA. Can be activated by both (-)-ABA and (+)-ABA. The polypeptide is Abscisic acid receptor PYL10 (PYL10) (Arabidopsis thaliana (Mouse-ear cress)).